A 1151-amino-acid chain; its full sequence is Nardilysin (1151 aa).

Positions 1–20 (MLRRVTVAAVCATRRKLCEA) are cleaved as a signal peptide. Disordered regions lie at residues 53-108 (RNKA…KSPS) and 133-207 (MEGK…KKTT). A phosphoserine mark is found at Ser-86, Ser-94, and Ser-96. The span at 141 to 198 (TDDEEEEEVEEEEEDDDEDSGAEIEDDDEEGFDDEDEFDDEHDDDLDTEDNELEELEE) shows a compositional bias: acidic residues. Zn(2+) is bound at residue His-233. Residue Glu-236 is the Proton acceptor of the active site. Zn(2+) contacts are provided by His-237 and Glu-314.

The protein belongs to the peptidase M16 family. In terms of assembly, interacts with BACE1 and NRG1. Requires Zn(2+) as cofactor. In terms of tissue distribution, primarily in adult heart, skeletal muscle, and testis and at much lower levels in other tissues.

The protein resides in the mitochondrion. The protein localises to the cell projection. It is found in the dendrite. The enzyme catalyses Hydrolysis of polypeptides, preferably at -Xaa-|-Arg-Lys-, and less commonly at -Arg-|-Arg-Xaa-, in which Xaa is not Arg or Lys.. In terms of biological role, cleaves peptide substrates on the N-terminus of arginine residues in dibasic pairs. Is a critical activator of BACE1- and ADAM17-mediated pro-neuregulin ectodomain shedding, involved in the positive regulation of axonal maturation and myelination. Required for proper functioning of 2-oxoglutarate dehydrogenase (OGDH). This Homo sapiens (Human) protein is Nardilysin.